Consider the following 170-residue polypeptide: Adenine phosphoribosyltransferase (170 aa).

Belongs to the purine/pyrimidine phosphoribosyltransferase family. Homodimer.

Its subcellular location is the cytoplasm. It catalyses the reaction AMP + diphosphate = 5-phospho-alpha-D-ribose 1-diphosphate + adenine. It participates in purine metabolism; AMP biosynthesis via salvage pathway; AMP from adenine: step 1/1. Its function is as follows. Catalyzes a salvage reaction resulting in the formation of AMP, that is energically less costly than de novo synthesis. This chain is Adenine phosphoribosyltransferase, found in Bacillus pumilus (strain SAFR-032).